We begin with the raw amino-acid sequence, 383 residues long: Probable L-aspartate decarboxylase (383 aa).

K231 carries the N6-(pyridoxal phosphate)lysine modification.

It belongs to the group II decarboxylase family. MfnA subfamily. Pyridoxal 5'-phosphate is required as a cofactor.

It catalyses the reaction L-aspartate + H(+) = beta-alanine + CO2. It participates in cofactor biosynthesis; coenzyme A biosynthesis. Functionally, catalyzes the decarboxylation of L-aspartate to produce beta-alanine. The protein is Probable L-aspartate decarboxylase of Thermococcus gammatolerans (strain DSM 15229 / JCM 11827 / EJ3).